Consider the following 539-residue polypeptide: MRVNSLTPQDLKAYGINDVQDIVYNPSYDLLYQEELDPTLEGYERGVLTNLGAVAVDTGIFTGRSPKDKYIVRDDTTRDTLWWSDKGKGKNDNKPLSQETWQHLKGLVTQQLSGKRLFIVDAFCGANADTRLSVRFITEVAWQAHFVKNMFIRPADEELVDFKPDFIVMNGAKCTNPQWKEQGLNSENFVAFNLTERIQLIGGTWYGGEMKKGMFSVMNYLLPLKGIASMHCSANVGEKGDVAVFFGLSGTGKTTLSTDPKRRLIGDDEHGWDDDGVFNFEGGCYAKTIKLSKEAEPEIYNAIRRDALLENVTVREDGSIDFDDGSKTENTRVSYPIYHIDNIVKPVSKAGHATKVIFLTADAFGVLPPVSRLTADQTQYHFLSGFTAKLAGTERGVTEPTPTFSACFGAAFLSLHPTQYAEVLVKRMQASGAQAYLVNTGWNGTGKRISIKDTRAIIDAILNGSLDNAETFNLPMFDLAIPTELPGVETRILDPRNTYASPEQWQEKATALAKLFVENFEKYTDTPAGEALVSAGPKL.

3 residues coordinate substrate: Arg64, Tyr206, and Lys212. ATP is bound by residues Lys212, His231, and 247-255; that span reads GLSGTGKTT. Mn(2+)-binding residues include Lys212 and His231. Asp268 serves as a coordination point for Mn(2+). ATP-binding positions include Glu296, Arg332, 448–449, and Thr454; that span reads RI. Arg332 contributes to the substrate binding site.

The protein belongs to the phosphoenolpyruvate carboxykinase (ATP) family. As to quaternary structure, monomer. Requires Mn(2+) as cofactor.

It is found in the cytoplasm. The catalysed reaction is oxaloacetate + ATP = phosphoenolpyruvate + ADP + CO2. Its pathway is carbohydrate biosynthesis; gluconeogenesis. In terms of biological role, involved in the gluconeogenesis. Catalyzes the conversion of oxaloacetate (OAA) to phosphoenolpyruvate (PEP) through direct phosphoryl transfer between the nucleoside triphosphate and OAA. The sequence is that of Phosphoenolpyruvate carboxykinase (ATP) from Citrobacter koseri (strain ATCC BAA-895 / CDC 4225-83 / SGSC4696).